We begin with the raw amino-acid sequence, 117 residues long: ATP-dependent Clp protease adapter protein ClpS 1 (117 aa).

Residues 1-33 (MIAMPVRMQQGSEGDGGGPSRGTSVITRTKPKT) are disordered.

This sequence belongs to the ClpS family. In terms of assembly, binds to the N-terminal domain of the chaperone ClpA.

Its function is as follows. Involved in the modulation of the specificity of the ClpAP-mediated ATP-dependent protein degradation. The sequence is that of ATP-dependent Clp protease adapter protein ClpS 1 from Rhizobium meliloti (strain 1021) (Ensifer meliloti).